The following is a 389-amino-acid chain: Galactose-1-phosphate uridylyltransferase (389 aa).

It belongs to the galactose-1-phosphate uridylyltransferase type 2 family.

The protein localises to the cytoplasm. It catalyses the reaction alpha-D-galactose 1-phosphate + UDP-alpha-D-glucose = alpha-D-glucose 1-phosphate + UDP-alpha-D-galactose. It participates in carbohydrate metabolism; galactose metabolism. This chain is Galactose-1-phosphate uridylyltransferase (galT), found in Butyrivibrio fibrisolvens.